A 346-amino-acid chain; its full sequence is Quinolinate synthase (346 aa).

2 residues coordinate iminosuccinate: His-47 and Ser-68. Cys-113 is a [4Fe-4S] cluster binding site. Iminosuccinate contacts are provided by residues 139–141 (YAN) and Ser-156. [4Fe-4S] cluster is bound at residue Cys-200. Iminosuccinate contacts are provided by residues 226 to 228 (HPE) and Thr-243. Cys-297 is a binding site for [4Fe-4S] cluster.

The protein belongs to the quinolinate synthase family. Type 1 subfamily. The cofactor is [4Fe-4S] cluster.

The protein resides in the cytoplasm. The enzyme catalyses iminosuccinate + dihydroxyacetone phosphate = quinolinate + phosphate + 2 H2O + H(+). It participates in cofactor biosynthesis; NAD(+) biosynthesis; quinolinate from iminoaspartate: step 1/1. In terms of biological role, catalyzes the condensation of iminoaspartate with dihydroxyacetone phosphate to form quinolinate. The chain is Quinolinate synthase from Pseudoalteromonas translucida (strain TAC 125).